The chain runs to 317 residues: Transcription factor elt-3 (317 aa).

Residues 1–34 form a disordered region; that stretch reads METANYYLPSPPYSSTSSSDSRESRMNTPIPTTY. Residues 244 to 268 form a GATA-type zinc finger; it reads CSNCKTRETTLWRRNGEGGVECNAC. Residues 290–317 are disordered; the sequence is KRNRRPRNESPNSAIRNTHQRHGHAAAC. Positions 307–317 are enriched in basic residues; it reads THQRHGHAAAC.

Interacts with skn-1; interaction may enhance transcriptional activation of target genes. Expressed in head, trunk and tail. Expression decreases with age in the hypodermal cells and the pharyngeal-intestinal valve cells in the head, eventually showing little or no expression in about 14 day old worms. Expressed in hypodermal, but not in intestinal, cells at 1 day of age. Expression in the hypodermal and intestinal cells in the trunk region decreases quickly between day 3 and day 5 of adulthood. Expression in the tail between days 3 and 14 stays approximately uniform.

Its subcellular location is the nucleus. Transcription factor. Required, in concert with signal transducer and transcription factor sta-2, for up-regulation of the vacuolar H(+)-ATPase and acceleration of lysosome maturation at molt. Involved in regulating hypodermal development, perhaps acting downstream of transcription factor elt-1. Modulates environmentally induced changes in collagen gene expression, including rol-6, sqt-1, lon-3, and dpy-13. Involved in regulating expression of various genes, including gst-4, sod-3, ugt-9, and col-144. In response to oxidative stress, required to up-regulate expression of gst-4 mRNA. Regulated by the Insulin/IGF-1-like signaling (IIS) mediated pathway. Plays a role in longevity. May regulate the expression of genes that control sensitivity to osmotic stress, in conjunction with the GATA region-binding transcription factor elt-2. May form a transcriptional circuit with GATA factors egl-18 and elt-6. In Caenorhabditis elegans, this protein is Transcription factor elt-3.